We begin with the raw amino-acid sequence, 198 residues long: TATA-box-binding protein (198 aa).

2 repeat units span residues 15-91 (IENI…IKTL) and 106-182 (IQNI…FDKL).

This sequence belongs to the TBP family.

In terms of biological role, general factor that plays a role in the activation of archaeal genes transcribed by RNA polymerase. Binds specifically to the TATA box promoter element which lies close to the position of transcription initiation. The sequence is that of TATA-box-binding protein (tbp) from Sulfurisphaera tokodaii (strain DSM 16993 / JCM 10545 / NBRC 100140 / 7) (Sulfolobus tokodaii).